Here is a 137-residue protein sequence, read N- to C-terminus: Nucleoside diphosphate kinase (137 aa).

Residues K9, F57, R85, T91, R102, and N112 each contribute to the ATP site. Catalysis depends on H115, which acts as the Pros-phosphohistidine intermediate.

This sequence belongs to the NDK family. Homotetramer. Mg(2+) serves as cofactor.

It is found in the cytoplasm. The enzyme catalyses a 2'-deoxyribonucleoside 5'-diphosphate + ATP = a 2'-deoxyribonucleoside 5'-triphosphate + ADP. It carries out the reaction a ribonucleoside 5'-diphosphate + ATP = a ribonucleoside 5'-triphosphate + ADP. Its function is as follows. Major role in the synthesis of nucleoside triphosphates other than ATP. The ATP gamma phosphate is transferred to the NDP beta phosphate via a ping-pong mechanism, using a phosphorylated active-site intermediate. This chain is Nucleoside diphosphate kinase, found in Leptospira biflexa serovar Patoc (strain Patoc 1 / ATCC 23582 / Paris).